The sequence spans 173 residues: Ribulose bisphosphate carboxylase small subunit, chloroplastic 5 (173 aa).

The N-terminal 49 residues, 1-49 (MASIPATVATVAQANMVAPFTGLKSNAAFPVTKKVNDFSTLPSNGGRVQ), are a transit peptide targeting the chloroplast.

This sequence belongs to the RuBisCO small chain family. In terms of assembly, heterohexadecamer of 8 large and 8 small subunits.

Its subcellular location is the plastid. It is found in the chloroplast. In terms of biological role, ruBisCO catalyzes two reactions: the carboxylation of D-ribulose 1,5-bisphosphate, the primary event in carbon dioxide fixation, as well as the oxidative fragmentation of the pentose substrate. Both reactions occur simultaneously and in competition at the same active site. Although the small subunit is not catalytic it is essential for maximal activity. The polypeptide is Ribulose bisphosphate carboxylase small subunit, chloroplastic 5 (Flaveria pringlei).